Consider the following 467-residue polypeptide: Putative ankyrin repeat protein R911 (467 aa).

ANK repeat units follow at residues 38 to 70, 79 to 108, 109 to 138, 140 to 168, 170 to 198, 199 to 228, 229 to 258, 260 to 288, 289 to 318, 320 to 348, 350 to 378, 379 to 408, 410 to 438, and 440 to 467; these read IKTD…PIIV, TLNK…DIRA, GNDY…DIRA, NDYA…NIRA, NDHA…DIRS, DNDY…NIRS, DNDY…DIKS, NDYA…NIRV, NNNY…DIIA, NNFA…DIKS, NDYA…DIRV, ENDY…DIRS, NDYA…DIKA, and DDYA…AVLS.

The protein is Putative ankyrin repeat protein R911 of Acanthamoeba polyphaga mimivirus (APMV).